We begin with the raw amino-acid sequence, 471 residues long: T-box transcription factor T (471 aa).

A DNA-binding region (T-box) is located at residues Leu24–Asp196.

In terms of tissue distribution, developing notochord.

The protein resides in the nucleus. In terms of biological role, involved in the transcriptional regulation of genes required for mesoderm differentiation. This is T-box transcription factor T from Halocynthia roretzi (Sea squirt).